The chain runs to 149 residues: Down syndrome critical region protein 9 (149 aa).

A disordered region spans residues 1–41; sequence MGRICPVNSRARRLRARPGRPSGDSLPYHQLQGGAPRLWSP.

This is Down syndrome critical region protein 9 (DSCR9) from Pan troglodytes (Chimpanzee).